The primary structure comprises 303 residues: HTH-type transcriptional regulator YjiE (303 aa).

Residues 11 to 68 (IETKWLYDFLTLEKCRNFSQAAVSRNVSQPAFSRRIRALEQAIGVELFNRQVTPLQLS) enclose the HTH lysR-type domain. The segment at residues 28-47 (FSQAAVSRNVSQPAFSRRIR) is a DNA-binding region (H-T-H motif).

Belongs to the LysR transcriptional regulatory family. As to quaternary structure, forms dimers, tetramers and possibly dodecameric complexes; oligomerization may be governed by cellular concentrations. DNA-binding seems to decrease oligomerization.

Functionally, protects cells from HOCl (hypochlorite) stress but not peroxide or diamide stress. Decreases the intracellular load of reactive oxygen species by up-regulating genes involved in methionine and cysteine biosynthesis and down-regulating Fur-regulated genes involved in iron acquisition. Has also been suggested to down-regulate expression of the flagellar regulon, decreasing motility, but this activity was not confirmed in a second study. The sequence is that of HTH-type transcriptional regulator YjiE (yjiE) from Escherichia coli (strain K12).